A 338-amino-acid polypeptide reads, in one-letter code: Anthranilate phosphoribosyltransferase (338 aa).

5-phospho-alpha-D-ribose 1-diphosphate is bound by residues Gly-81, 84-85 (GD), Thr-89, 91-94 (NVST), 109-117 (KHGNRALSS), and Ala-121. Gly-81 serves as a coordination point for anthranilate. Ser-93 contacts Mg(2+). An anthranilate-binding site is contributed by Asn-112. Arg-167 provides a ligand contact to anthranilate. Residues Asp-225 and Glu-226 each contribute to the Mg(2+) site.

The protein belongs to the anthranilate phosphoribosyltransferase family. As to quaternary structure, homodimer. Requires Mg(2+) as cofactor.

The enzyme catalyses N-(5-phospho-beta-D-ribosyl)anthranilate + diphosphate = 5-phospho-alpha-D-ribose 1-diphosphate + anthranilate. It participates in amino-acid biosynthesis; L-tryptophan biosynthesis; L-tryptophan from chorismate: step 2/5. Functionally, catalyzes the transfer of the phosphoribosyl group of 5-phosphorylribose-1-pyrophosphate (PRPP) to anthranilate to yield N-(5'-phosphoribosyl)-anthranilate (PRA). The chain is Anthranilate phosphoribosyltransferase from Chelativorans sp. (strain BNC1).